Here is a 428-residue protein sequence, read N- to C-terminus: Ribosomal RNA small subunit methyltransferase B (428 aa).

S-adenosyl-L-methionine-binding positions include 253–259 (CAAPGGK), aspartate 276, aspartate 302, and aspartate 321. Residue cysteine 374 is the Nucleophile of the active site.

The protein belongs to the class I-like SAM-binding methyltransferase superfamily. RsmB/NOP family.

Its subcellular location is the cytoplasm. It carries out the reaction cytidine(967) in 16S rRNA + S-adenosyl-L-methionine = 5-methylcytidine(967) in 16S rRNA + S-adenosyl-L-homocysteine + H(+). Its function is as follows. Specifically methylates the cytosine at position 967 (m5C967) of 16S rRNA. The protein is Ribosomal RNA small subunit methyltransferase B of Enterobacter sp. (strain 638).